A 321-amino-acid chain; its full sequence is Anthranilate phosphoribosyltransferase (321 aa).

5-phospho-alpha-D-ribose 1-diphosphate contacts are provided by residues G72, 75-76, T80, 82-85, 99-107, and S111; these read GD, NVST, and KHGNVSITS. G72 contributes to the anthranilate binding site. S84 is a Mg(2+) binding site. N102 is an anthranilate binding site. R157 is an anthranilate binding site. Residues D216 and E217 each contribute to the Mg(2+) site.

Belongs to the anthranilate phosphoribosyltransferase family. In terms of assembly, homodimer. The cofactor is Mg(2+).

The catalysed reaction is N-(5-phospho-beta-D-ribosyl)anthranilate + diphosphate = 5-phospho-alpha-D-ribose 1-diphosphate + anthranilate. It participates in amino-acid biosynthesis; L-tryptophan biosynthesis; L-tryptophan from chorismate: step 2/5. Catalyzes the transfer of the phosphoribosyl group of 5-phosphorylribose-1-pyrophosphate (PRPP) to anthranilate to yield N-(5'-phosphoribosyl)-anthranilate (PRA). The sequence is that of Anthranilate phosphoribosyltransferase from Methanococcus maripaludis (strain DSM 14266 / JCM 13030 / NBRC 101832 / S2 / LL).